The chain runs to 378 residues: uncharacterized protein (378 aa).

The protein belongs to the IIV-6 329R family.

This is an uncharacterized protein from Acheta domesticus (House cricket).